The sequence spans 140 residues: Photosystem I reaction center subunit XI (140 aa).

Helical transmembrane passes span 48 to 68, 79 to 99, and 119 to 139; these read LEIG…LGPL, LLSA…YGAV, and SGFL…LTLF.

This sequence belongs to the PsaL family.

Its subcellular location is the plastid. It localises to the chloroplast thylakoid membrane. The protein is Photosystem I reaction center subunit XI of Cyanidioschyzon merolae (strain NIES-3377 / 10D) (Unicellular red alga).